A 396-amino-acid polypeptide reads, in one-letter code: Elongation factor Tu (396 aa).

A tr-type G domain is found at K10–V206. The segment at G19–T26 is G1. G19–T26 provides a ligand contact to GTP. Position 26 (T26) interacts with Mg(2+). A G2 region spans residues G62–N66. Residues D83–G86 form a G3 region. GTP contacts are provided by residues D83–H87 and N138–D141. Positions N138 to D141 are G4. Positions S176 to L178 are G5.

Belongs to the TRAFAC class translation factor GTPase superfamily. Classic translation factor GTPase family. EF-Tu/EF-1A subfamily. In terms of assembly, monomer.

The protein localises to the cytoplasm. The catalysed reaction is GTP + H2O = GDP + phosphate + H(+). Functionally, GTP hydrolase that promotes the GTP-dependent binding of aminoacyl-tRNA to the A-site of ribosomes during protein biosynthesis. The polypeptide is Elongation factor Tu (Arthrobacter sp. (strain FB24)).